The chain runs to 333 residues: NADH-quinone oxidoreductase subunit H (333 aa).

The next 8 helical transmembrane spans lie at 15–35 (LVIF…FVTY), 88–108 (FILA…TLPF), 117–137 (IGVG…GVVA), 159–179 (ISYE…TGSL), 191–211 (VWYI…AVAE), 250–270 (LFAM…PVMF), 273–293 (FIPG…VLIW), and 313–333 (VLFP…ELFF).

It belongs to the complex I subunit 1 family. In terms of assembly, NDH-1 is composed of 14 different subunits. Subunits NuoA, H, J, K, L, M, N constitute the membrane sector of the complex.

It is found in the cell membrane. It carries out the reaction a quinone + NADH + 5 H(+)(in) = a quinol + NAD(+) + 4 H(+)(out). NDH-1 shuttles electrons from NADH, via FMN and iron-sulfur (Fe-S) centers, to quinones in the respiratory chain. The immediate electron acceptor for the enzyme in this species is believed to be ubiquinone. Couples the redox reaction to proton translocation (for every two electrons transferred, four hydrogen ions are translocated across the cytoplasmic membrane), and thus conserves the redox energy in a proton gradient. This subunit may bind ubiquinone. The polypeptide is NADH-quinone oxidoreductase subunit H (Geobacillus sp. (strain WCH70)).